The primary structure comprises 199 residues: Interferon kappa (199 aa).

The N-terminal stretch at 1 to 21 (MTPKFLWLVALVALYIPPIQS) is a signal peptide. Cystine bridges form between C24–C119 and C49–C162.

It belongs to the alpha/beta interferon family. In terms of tissue distribution, expressed at low levels in peritoneal macrophages.

Its subcellular location is the secreted. In terms of biological role, may play a role in the regulation of immune cell function. This chain is Interferon kappa (Ifnk), found in Mus musculus (Mouse).